A 2758-amino-acid chain; its full sequence is Highly reducing polyketide synthase NEC1 (2758 aa).

A Ketosynthase family 3 (KS3) domain is found at 153 to 492; it reads EASSPIIGLD…GSNAHVVMDD (340 aa). The tract at residues 512–576 is disordered; it reads PRLPGSSSSR…NTDTLQTTDT (65 aa). A compositionally biased stretch (low complexity) spans 566-576; it reads TNTDTLQTTDT. A malonyl-CoA:ACP transacylase (MAT) domain region spans residues 700–1044; it reads VFTGQGAQWP…GYATVLKRGD (345 aa). Serine 790 acts as the For malonyltransferase activity in catalysis. The interval 1124–1255 is N-terminal hotdog fold; that stretch reads HELLGAPVPD…GFVRTEYSQT (132 aa). The tract at residues 1124 to 1442 is dehydratase (DH) domain; that stretch reads HELLGAPVPD…VFKTIPNTAS (319 aa). In terms of domain architecture, PKS/mFAS DH spans 1124–1443; sequence HELLGAPVPD…FKTIPNTASS (320 aa). Catalysis depends on histidine 1156, which acts as the Proton acceptor; for dehydratase activity. Positions 1283 to 1443 are C-terminal hotdog fold; the sequence is TSMVHADKVY…FKTIPNTASS (161 aa). Aspartate 1351 acts as the Proton donor; for dehydratase activity in catalysis. A methyltransferase (CMet) domain region spans residues 1622 to 1727; sequence LEVGGGTGGA…RKLLKPGGKL (106 aa). The segment at 2031–2344 is enoyl reductase (ER) domain; that stretch reads GTADVCFSED…LGKGEDAVVL (314 aa). Residues 2372–2553 are ketoreductase (KR) domain; the sequence is ASYMVVGGLG…PVAVSLDLPV (182 aa). In terms of domain architecture, Carrier spans 2673–2750; the sequence is EAQAVVLDAL…ALAAAVAGRS (78 aa). Serine 2710 carries the O-(pantetheine 4'-phosphoryl)serine modification.

Its function is as follows. Highly reducing polyketide synthase; part of the gene cluster that mediates the biosynthesis of nectriapyrone and its analogs phomopyrone A, acropyrone and zaepyrone. The nectriapyrone biosynthetic gene cluster consists of two genes, the highly reducing polyketide synthase NEC1 that produces a demethylated analog of nectriapyrone from one unit of acetyl-CoA and one unit of malonyl-CoA; and the O-methyltransferase NEC2 that further methylates the NEC1 product to yield nectriapyrone. Nectriapyrone is further hydrolyzed to nectriapyrone D, also known as gulypyrone B, by an unidentified hydrolase localized outside the nectriapyrone cluster. The protein is Highly reducing polyketide synthase NEC1 of Pyricularia oryzae (strain 70-15 / ATCC MYA-4617 / FGSC 8958) (Rice blast fungus).